The primary structure comprises 283 residues: Cyclin-C (283 aa).

The 99-residue stretch at 46 to 144 (NVIQALGEHL…ILECEFYLLE (99 aa)) folds into the Cyclin N-terminal domain. A disordered region spans residues 252–283 (TILNKMPKPKPPPNSEGEQGTNGSQSSGYSQS). Residues 267–283 (EGEQGTNGSQSSGYSQS) are compositionally biased toward polar residues.

Belongs to the cyclin family. Cyclin C subfamily. Component of the Mediator complex. The cylin/CDK pair formed by ccnc/cdk8 also associates with the large subunit of RNA polymerase II.

The protein localises to the nucleus. Functionally, component of the Mediator complex, a coactivator involved in regulated gene transcription of nearly all RNA polymerase II-dependent genes. Mediator functions as a bridge to convey information from gene-specific regulatory proteins to the basal RNA polymerase II transcription machinery. Mediator is recruited to promoters by direct interactions with regulatory proteins and serves as a scaffold for the assembly of a functional preinitiation complex with RNA polymerase II and the general transcription factors. Binds to and activates cyclin-dependent kinase cdk8 that phosphorylates the CTD (C-terminal domain) of the large subunit of RNA polymerase II (RNAp II), which may inhibit the formation of a transcription initiation complex. In Xenopus tropicalis (Western clawed frog), this protein is Cyclin-C (ccnc).